A 431-amino-acid polypeptide reads, in one-letter code: Lipid storage droplets surface-binding protein 1 (431 aa).

The interval 397–431 is disordered; it reads KVTGSDGGNSNHRSSRRRQDPNHYSATHNNINGVY. Residues 418 to 431 are compositionally biased toward polar residues; it reads NHYSATHNNINGVY.

This sequence belongs to the perilipin family.

The protein resides in the cytoplasm. It localises to the lipid droplet. Required for normal deposition of neutral lipids in the oocyte. In Drosophila melanogaster (Fruit fly), this protein is Lipid storage droplets surface-binding protein 1.